Here is a 62-residue protein sequence, read N- to C-terminus: Pro-MCH variant (62 aa).

The segment at 23 to 41 (GSVAFPAENGVQDTESTQE) is NGE-like. Residues 28 to 62 (PAENGVQDTESTQEKRETGDEENSAQFPIGRRDFD) are disordered. An NEI-like region spans residues 44–56 (ETGDEENSAQFPI). The tract at residues 60–62 (DFD) is melanin-concentrating hormone-like.

The protein belongs to the melanin-concentrating hormone family.

The protein is Pro-MCH variant (PMCHL1) of Hylobates lar (Lar gibbon).